The sequence spans 134 residues: Large-conductance mechanosensitive channel (134 aa).

2 consecutive transmembrane segments (helical) span residues 16 to 36 (VIDL…VTAL) and 84 to 104 (INTL…IKVI).

The protein belongs to the MscL family. As to quaternary structure, homopentamer.

The protein resides in the cell inner membrane. Functionally, channel that opens in response to stretch forces in the membrane lipid bilayer. May participate in the regulation of osmotic pressure changes within the cell. The chain is Large-conductance mechanosensitive channel from Stenotrophomonas maltophilia (strain R551-3).